We begin with the raw amino-acid sequence, 426 residues long: 3-phosphoshikimate 1-carboxyvinyltransferase (426 aa).

3-phosphoshikimate contacts are provided by lysine 22, serine 23, and arginine 27. Lysine 22 lines the phosphoenolpyruvate pocket. 2 residues coordinate phosphoenolpyruvate: glycine 96 and arginine 124. The 3-phosphoshikimate site is built by serine 170, serine 171, glutamine 172, serine 198, aspartate 314, asparagine 337, and lysine 341. Glutamine 172 contributes to the phosphoenolpyruvate binding site. Aspartate 314 functions as the Proton acceptor in the catalytic mechanism. Residues arginine 345, arginine 387, and lysine 412 each contribute to the phosphoenolpyruvate site.

This sequence belongs to the EPSP synthase family. As to quaternary structure, monomer.

Its subcellular location is the cytoplasm. It carries out the reaction 3-phosphoshikimate + phosphoenolpyruvate = 5-O-(1-carboxyvinyl)-3-phosphoshikimate + phosphate. It participates in metabolic intermediate biosynthesis; chorismate biosynthesis; chorismate from D-erythrose 4-phosphate and phosphoenolpyruvate: step 6/7. Functionally, catalyzes the transfer of the enolpyruvyl moiety of phosphoenolpyruvate (PEP) to the 5-hydroxyl of shikimate-3-phosphate (S3P) to produce enolpyruvyl shikimate-3-phosphate and inorganic phosphate. In Shewanella baltica (strain OS155 / ATCC BAA-1091), this protein is 3-phosphoshikimate 1-carboxyvinyltransferase.